The chain runs to 167 residues: Envelope glycoprotein L (167 aa).

A signal peptide spans 1 to 20 (MGIFALFAVLWTTLLVTSHA). Residues 18–131 (SHAYVALPCC…ADSSIHNVNI (114 aa)) are interaction with gH. The span at 142–154 (RTGSVSGSQTRAK) shows a compositional bias: polar residues. The interval 142–167 (RTGSVSGSQTRAKSSSRRAHAGQKGK) is disordered. Over residues 155 to 167 (SSSRRAHAGQKGK) the composition is skewed to basic residues.

The protein belongs to the herpesviridae glycoprotein L family. Interacts with glycoprotein H (gH); this interaction is necessary for the correct processing and cell surface expression of gH. The heterodimer gH/gL seems to interact with gB trimers during fusion. When in complex with gH, interacts with host EPHA2; this interaction triggers EPHA2 phosphorylation and endocytosis, allowing virus entry.

It is found in the virion membrane. Its subcellular location is the host cell membrane. It localises to the host Golgi apparatus. The protein localises to the host trans-Golgi network. The heterodimer glycoprotein H-glycoprotein L is required for the fusion of viral and plasma membranes leading to virus entry into the host cell. Acts as a functional inhibitor of gH and maintains gH in an inhibited form. Upon binding to host integrins, gL dissociates from gH leading to activation of the viral fusion glycoproteins gB and gH. Targets heparan sulfate proteoglycans of the syndecan family as well as host EPHA2 to promote viral entry. This is Envelope glycoprotein L from Human herpesvirus 8 type P (isolate GK18) (HHV-8).